Reading from the N-terminus, the 43-residue chain is Defensin, isoforms B and C (43 aa).

3 cysteine pairs are disulfide-bonded: cysteine 3-cysteine 34, cysteine 20-cysteine 40, and cysteine 24-cysteine 42.

The protein belongs to the invertebrate defensin family. Type 1 subfamily.

The protein localises to the secreted. In terms of biological role, involved in anti Gram-positive activity of immune hemolymph of Z.atratus. In Zophobas atratus (Giant mealworm beetle), this protein is Defensin, isoforms B and C.